The primary structure comprises 176 residues: Membrane-anchored junction protein (176 aa).

Residues 1-151 (MSLKPFTYPF…QHNSPPPKER (151 aa)) are Nuclear-facing. The disordered stretch occupies residues 59 to 150 (AVMRKRKHMD…LQHNSPPPKE (92 aa)). Over residues 95–107 (PPVETRRNRERKT) the composition is skewed to basic and acidic residues. Polar residues predominate over residues 108 to 120 (QQGLQETLASDIT). The helical transmembrane segment at 152–170 (AATGFFGFLSSLFPFRYFF) threads the bilayer. Residues 171–176 (RKSSHS) lie on the Perinuclear space side of the membrane.

The protein belongs to the MAJIN family. As to quaternary structure, component of the MAJIN-TERB1-TERB2 complex, composed of MAJIN, TERB1 and TERB2.

The protein resides in the nucleus inner membrane. Its subcellular location is the chromosome. The protein localises to the telomere. Functionally, meiosis-specific telomere-associated protein involved in meiotic telomere attachment to the nucleus inner membrane, a crucial step for homologous pairing and synapsis. Component of the MAJIN-TERB1-TERB2 complex, which promotes telomere cap exchange by mediating attachment of telomeric DNA to the inner nuclear membrane and replacement of the protective cap of telomeric chromosomes: in early meiosis, the MAJIN-TERB1-TERB2 complex associates with telomeric DNA and the shelterin/telosome complex. During prophase, the complex matures and promotes release of the shelterin/telosome complex from telomeric DNA. In the complex, MAJIN acts as the anchoring subunit to the nucleus inner membrane. MAJIN shows DNA-binding activity, possibly for the stabilization of telomere attachment on the nucleus inner membrane. The chain is Membrane-anchored junction protein from Homo sapiens (Human).